The sequence spans 338 residues: Solute carrier family 35 member G5 (338 aa).

The tract at residues 1-28 is disordered; sequence MAGSHPYFNLPDSTHPSPPSGPPSLRWH. Transmembrane regions (helical) follow at residues 37-57, 67-87, 105-125, 160-180, 190-210, 221-241, 250-270, 281-301, and 310-330; these read TNGLLVALLGGGLPAGFVGPL, LPSLELLICRCLFHLPIALLL, CFCALLNVLSIGCAYSAVQVV, CGLLGSILGLIIIVGPGLWTL, ALGYVQAFLGGLALSLGLLVY, TVAFLSGLVGLLGSVPGLFVL, LLSWSCVGAVGILTLVSFTCV, LVCAVLHSEVVVALILQYYML, and IMGAGVVLGNITIIPAWNLSC. An EamA 1 domain is found at 49 to 174; it reads LPAGFVGPLS…SILGLIIIVG (126 aa). An EamA 2 domain is found at 272 to 325; the sequence is YAVTKAHPALVCAVLHSEVVVALILQYYMLPETVAPSDIMGAGVVLGNITIIPA.

It belongs to the SLC35G solute transporter family.

It is found in the membrane. In Gorilla gorilla gorilla (Western lowland gorilla), this protein is Solute carrier family 35 member G5 (SLC35G5).